Here is a 497-residue protein sequence, read N- to C-terminus: Membrane-bound lytic murein transglycosylase F (497 aa).

The signal sequence occupies residues 1-29 (MFFRPDFRPRCAKWLIATGLFLMLGACVE). The tract at residues 30–267 (KPTTLERVKE…RLKDRYYGHV (238 aa)) is non-LT domain. The LT domain stretch occupies residues 268 to 497 (DVLGYVGAYT…PASSPEKPAL (230 aa)). Glutamate 314 is an active-site residue. The tract at residues 464–497 (VADGNLHVPGVDKTQPPAPTAPVVPASSPEKPAL) is disordered. A compositionally biased stretch (low complexity) spans 486–497 (VVPASSPEKPAL).

It in the N-terminal section; belongs to the bacterial solute-binding protein 3 family. In the C-terminal section; belongs to the transglycosylase Slt family.

The protein resides in the cell outer membrane. It catalyses the reaction Exolytic cleavage of the (1-&gt;4)-beta-glycosidic linkage between N-acetylmuramic acid (MurNAc) and N-acetylglucosamine (GlcNAc) residues in peptidoglycan, from either the reducing or the non-reducing ends of the peptidoglycan chains, with concomitant formation of a 1,6-anhydrobond in the MurNAc residue.. Functionally, murein-degrading enzyme that degrades murein glycan strands and insoluble, high-molecular weight murein sacculi, with the concomitant formation of a 1,6-anhydromuramoyl product. Lytic transglycosylases (LTs) play an integral role in the metabolism of the peptidoglycan (PG) sacculus. Their lytic action creates space within the PG sacculus to allow for its expansion as well as for the insertion of various structures such as secretion systems and flagella. This chain is Membrane-bound lytic murein transglycosylase F, found in Pseudomonas syringae pv. tomato (strain ATCC BAA-871 / DC3000).